A 116-amino-acid polypeptide reads, in one-letter code: Propanediol dehydratase-reactivating factor small subunit (116 aa).

A Mg(2+)-binding site is contributed by Glu-31.

Belongs to the DdrB/PduH family. As to quaternary structure, forms a heterotetramer PduG(2)/PduH(2). Mg(2+) is required as a cofactor.

It localises to the bacterial microcompartment. It catalyses the reaction ATP + H2O = ADP + phosphate + H(+). The protein operates within polyol metabolism; 1,2-propanediol degradation. Small subunit of the propanediol dehydratase-reactivating factor (DDR), which reactivates suicidally inhibited adenosylcobalamin-dependent propanediol dehydratase (diol dehydratase, DDH) found in the bacterial microcompartment (BMC) dedicated to 1,2-propanediol (1,2-PD) degradation. Reactivates inactivated DDH in the presence of ATP, Mg(2+) and free adenosylcobalamin (AdoCbl), by mediating the exchange of the tightly bound damaged cofactor AdoCbl for a free intact one. Its function is as follows. Expression of a cosmid containing the full 21-gene pdu operon in E.coli allows E.coli to grow on 1,2-propanediol (1,2-PD) with the appearance of bacterial microcompartments (BMC) in its cytoplasm. Functionally, the 1,2-PD-specific bacterial microcompartment (BMC) concentrates low levels of 1,2-PD catabolic enzymes, concentrates volatile reaction intermediates thus enhancing pathway flux and keeps the level of toxic, mutagenic propionaldehyde low. The sequence is that of Propanediol dehydratase-reactivating factor small subunit from Citrobacter freundii.